The chain runs to 753 residues: 5-methyltetrahydropteroyltriglutamate--homocysteine methyltransferase (753 aa).

Residues 17 to 20 and Lys-117 each bind 5-methyltetrahydropteroyltri-L-glutamate; that span reads RELK. L-homocysteine contacts are provided by residues 431–433 and Glu-484; that span reads IGS. Residues 431-433 and Glu-484 contribute to the L-methionine site; that span reads IGS. 5-methyltetrahydropteroyltri-L-glutamate contacts are provided by residues 515-516 and Trp-561; that span reads RC. Asp-599 is an L-homocysteine binding site. Residue Asp-599 participates in L-methionine binding. Glu-605 contributes to the 5-methyltetrahydropteroyltri-L-glutamate binding site. Residues His-641, Cys-643, and Glu-665 each coordinate Zn(2+). The Proton donor role is filled by His-694. Cys-726 contacts Zn(2+).

This sequence belongs to the vitamin-B12 independent methionine synthase family. Zn(2+) is required as a cofactor.

The catalysed reaction is 5-methyltetrahydropteroyltri-L-glutamate + L-homocysteine = tetrahydropteroyltri-L-glutamate + L-methionine. Its pathway is amino-acid biosynthesis; L-methionine biosynthesis via de novo pathway; L-methionine from L-homocysteine (MetE route): step 1/1. Catalyzes the transfer of a methyl group from 5-methyltetrahydrofolate to homocysteine resulting in methionine formation. This chain is 5-methyltetrahydropteroyltriglutamate--homocysteine methyltransferase, found in Escherichia coli (strain UTI89 / UPEC).